Here is an 85-residue protein sequence, read N- to C-terminus: Oxytocin-neurophysin 1 (85 aa).

Residue glycine 3 is modified to Glycine amide. 6 disulfide bridges follow: cysteine 16/cysteine 60, cysteine 19/cysteine 33, cysteine 27/cysteine 50, cysteine 34/cysteine 40, cysteine 67/cysteine 79, and cysteine 80/cysteine 85.

This sequence belongs to the vasopressin/oxytocin family. Interacts with oxytocin receptor (Ki=1.5 nM). Interacts with vasopressin V1aR/AVPR1A (Ki=37 nM), V1bR/AVPR1B (Ki=222 nM), and V2R/AVPR2 receptors (Ki=823 nM).

Functionally, neurophysin 1 specifically binds oxytocin. Its function is as follows. Oxytocin causes contraction of the smooth muscle of the uterus and of the mammary gland. Acts by binding to oxytocin receptor (OXTR). This is Oxytocin-neurophysin 1 (OXT) from Papio hamadryas (Hamadryas baboon).